Reading from the N-terminus, the 240-residue chain is MSSSPRSPDARPLKVRVKSARTRSSSSQKWLQRQLNDPYVARAKREGWRSRAAFKLIEMDEKLHVLKRGMRIVDLGAAPGGWSQVAAKKIGAAEGQGKIVAIDLLEMDAVTGVMFAQMDFLDPTAPERLFAMLDGKADLVMSDMAANTTGHKKTDHLKIIALVELAADFARQVLAPGGAFIAKVFQGGTEGTLLADLKRDYAQVRHLKPAASRADSAELYLVATGFRGSADRTEDETDEA.

The disordered stretch occupies residues 1–28; sequence MSSSPRSPDARPLKVRVKSARTRSSSSQ. Residues Gly-80, Trp-82, Asp-103, Asp-119, and Asp-143 each coordinate S-adenosyl-L-methionine. The active-site Proton acceptor is the Lys-183.

This sequence belongs to the class I-like SAM-binding methyltransferase superfamily. RNA methyltransferase RlmE family.

It is found in the cytoplasm. The enzyme catalyses uridine(2552) in 23S rRNA + S-adenosyl-L-methionine = 2'-O-methyluridine(2552) in 23S rRNA + S-adenosyl-L-homocysteine + H(+). Its function is as follows. Specifically methylates the uridine in position 2552 of 23S rRNA at the 2'-O position of the ribose in the fully assembled 50S ribosomal subunit. In Azorhizobium caulinodans (strain ATCC 43989 / DSM 5975 / JCM 20966 / LMG 6465 / NBRC 14845 / NCIMB 13405 / ORS 571), this protein is Ribosomal RNA large subunit methyltransferase E.